A 655-amino-acid polypeptide reads, in one-letter code: D-xylonate dehydratase YjhG (655 aa).

The protein belongs to the IlvD/Edd family.

The catalysed reaction is D-xylonate = 2-dehydro-3-deoxy-D-arabinonate + H2O. With respect to regulation, activity is increased in the presence of Mn(+) and Mg(2+). Inhibited by thiol compounds. Functionally, catalyzes the dehydration of D-xylonic acid to form 2-dehydro-3-deoxy-D-pentonate. The polypeptide is D-xylonate dehydratase YjhG (yjhG) (Escherichia coli (strain K12)).